A 349-amino-acid polypeptide reads, in one-letter code: Gibberellin 3-beta-dioxygenase 3 (349 aa).

Residues 201-305 (SIQSFLQLNS…RVSAAYFAGP (105 aa)) enclose the Fe2OG dioxygenase domain. Fe cation-binding residues include H226, D228, and H286. R296 is an active-site residue.

It belongs to the iron/ascorbate-dependent oxidoreductase family. GA3OX subfamily. It depends on L-ascorbate as a cofactor. Fe cation is required as a cofactor. As to expression, expressed in flower clusters and siliques.

The enzyme catalyses gibberellin A20 + 2-oxoglutarate + O2 = gibberellin A1 + succinate + CO2. It functions in the pathway plant hormone biosynthesis; gibberellin biosynthesis. Its function is as follows. Converts the inactive gibberellin (GA) precursors GA9 and GA20 in the bioactives gibberellins GA4 and GA1. Involved in the production of bioactive GA for reproductive development. In Arabidopsis thaliana (Mouse-ear cress), this protein is Gibberellin 3-beta-dioxygenase 3 (GA3OX3).